A 374-amino-acid polypeptide reads, in one-letter code: Flap endonuclease 1 (374 aa).

The N-domain stretch occupies residues 1–105; sequence MGVKGLNQLI…GELEKRMIRK (105 aa). Residue Asp-34 coordinates Mg(2+). Positions 47 and 71 each coordinate DNA. Residues Asp-87, Glu-159, Glu-161, Asp-180, and Asp-182 each contribute to the Mg(2+) site. The I-domain stretch occupies residues 123 to 254; it reads EMVRYEKRSV…VTAFKLIKEH (132 aa). Glu-159 lines the DNA pocket. DNA-binding residues include Gly-232 and Asp-234. Position 234 (Asp-234) interacts with Mg(2+). An interaction with PCNA region spans residues 341 to 349; sequence VQGRLDGFF. Residues 354 to 365 show a composition bias toward basic and acidic residues; it reads TEKRKPEQDKKT. The interval 354–374 is disordered; it reads TEKRKPEQDKKTKGSKKAKKK.

Belongs to the XPG/RAD2 endonuclease family. FEN1 subfamily. In terms of assembly, interacts with PCNA. Three molecules of FEN1 bind to one PCNA trimer with each molecule binding to one PCNA monomer. PCNA stimulates the nuclease activity without altering cleavage specificity. Requires Mg(2+) as cofactor. Phosphorylated. Phosphorylation upon DNA damage induces relocalization to the nuclear plasma.

Its subcellular location is the nucleus. The protein localises to the nucleolus. It is found in the nucleoplasm. It localises to the mitochondrion. In terms of biological role, structure-specific nuclease with 5'-flap endonuclease and 5'-3' exonuclease activities involved in DNA replication and repair. During DNA replication, cleaves the 5'-overhanging flap structure that is generated by displacement synthesis when DNA polymerase encounters the 5'-end of a downstream Okazaki fragment. It enters the flap from the 5'-end and then tracks to cleave the flap base, leaving a nick for ligation. Also involved in the long patch base excision repair (LP-BER) pathway, by cleaving within the apurinic/apyrimidinic (AP) site-terminated flap. Acts as a genome stabilization factor that prevents flaps from equilibrating into structures that lead to duplications and deletions. Also possesses 5'-3' exonuclease activity on nicked or gapped double-stranded DNA, and exhibits RNase H activity. Also involved in replication and repair of rDNA and in repairing mitochondrial DNA. This is Flap endonuclease 1 from Meyerozyma guilliermondii (strain ATCC 6260 / CBS 566 / DSM 6381 / JCM 1539 / NBRC 10279 / NRRL Y-324) (Yeast).